Here is a 210-residue protein sequence, read N- to C-terminus: Thymidylate kinase (210 aa).

DGMP is bound at residue Asp-17. Residue Asp-17 coordinates dTMP. Residues Arg-18, Ser-19, Gly-20, Lys-21, Ser-22, and Thr-23 each coordinate ATP. Arg-47, Phe-74, Arg-78, Arg-99, and Tyr-107 together coordinate dTMP. DGMP contacts are provided by Phe-74, Arg-78, Arg-99, Tyr-107, Ser-108, and Tyr-153. Residues 143–155 form an LID region; it reads QNRSDYGEEIYEK. Residue Arg-182 coordinates ATP.

It belongs to the thymidylate kinase family. As to quaternary structure, homodimer. Binds two dTMP molecules per dimer. Binds only one dTGP molecule per dimer.

It catalyses the reaction dTMP + ATP = dTDP + ADP. The catalysed reaction is dGMP + ATP = dGDP + ADP. The protein operates within pyrimidine metabolism; dTTP biosynthesis. Inhibited by deoxyguanosine (dG), deoxythymidine (dT) and azidothymidine (AZT). Functionally, catalyzes the phosphorylation of thymidine monophosphate (dTMP) to thymidine diphosphate (dTDP), the immediate precursor for the DNA building block dTTP. Can also phosphorylate dGMP and to a lesser extent GMP, dUMP and dIMP. Can use either ATP or dATP as phosphate donors in presence of Mg(2+). In Plasmodium falciparum (isolate 3D7), this protein is Thymidylate kinase.